Consider the following 496-residue polypeptide: Pup--protein ligase (496 aa).

Mg(2+) is bound at residue E30. R73 contacts ATP. Y75 lines the Mg(2+) pocket. D77 functions as the Proton acceptor in the catalytic mechanism. E83 contacts Mg(2+). ATP-binding residues include T86 and W450.

The protein belongs to the Pup ligase/Pup deamidase family. Pup-conjugating enzyme subfamily.

The catalysed reaction is ATP + [prokaryotic ubiquitin-like protein]-L-glutamate + [protein]-L-lysine = ADP + phosphate + N(6)-([prokaryotic ubiquitin-like protein]-gamma-L-glutamyl)-[protein]-L-lysine.. Its pathway is protein degradation; proteasomal Pup-dependent pathway. It participates in protein modification; protein pupylation. In terms of biological role, catalyzes the covalent attachment of the prokaryotic ubiquitin-like protein modifier Pup to the proteasomal substrate proteins, thereby targeting them for proteasomal degradation. This tagging system is termed pupylation. The ligation reaction involves the side-chain carboxylate of the C-terminal glutamate of Pup and the side-chain amino group of a substrate lysine. This Bifidobacterium animalis subsp. lactis (strain AD011) protein is Pup--protein ligase.